Here is a 535-residue protein sequence, read N- to C-terminus: Phosphoenolpyruvate carboxykinase (ATP) (535 aa).

Substrate contacts are provided by R59, Y201, and K207. ATP is bound by residues K207, H226, and 243 to 251; that span reads GLSGTGKTT. Mn(2+)-binding residues include K207 and H226. D264 contacts Mn(2+). ATP contacts are provided by residues E292, R328, 444–445, and T450; that span reads RI. Residue R328 coordinates substrate.

The protein belongs to the phosphoenolpyruvate carboxykinase (ATP) family. Requires Mn(2+) as cofactor.

The protein localises to the cytoplasm. It carries out the reaction oxaloacetate + ATP = phosphoenolpyruvate + ADP + CO2. It participates in carbohydrate biosynthesis; gluconeogenesis. Involved in the gluconeogenesis. Catalyzes the conversion of oxaloacetate (OAA) to phosphoenolpyruvate (PEP) through direct phosphoryl transfer between the nucleoside triphosphate and OAA. This is Phosphoenolpyruvate carboxykinase (ATP) from Bacteroides thetaiotaomicron (strain ATCC 29148 / DSM 2079 / JCM 5827 / CCUG 10774 / NCTC 10582 / VPI-5482 / E50).